The following is a 437-amino-acid chain: Amino-acid acetyltransferase (437 aa).

An N-acetyltransferase domain is found at 289-429; that stretch reads ENIRLATSFD…EHYNYQRMSK (141 aa).

The protein belongs to the acetyltransferase family. ArgA subfamily.

Its subcellular location is the cytoplasm. The catalysed reaction is L-glutamate + acetyl-CoA = N-acetyl-L-glutamate + CoA + H(+). The protein operates within amino-acid biosynthesis; L-arginine biosynthesis; N(2)-acetyl-L-ornithine from L-glutamate: step 1/4. The protein is Amino-acid acetyltransferase of Actinobacillus pleuropneumoniae serotype 5b (strain L20).